Consider the following 309-residue polypeptide: DnaJ-like protein MG002 homolog (309 aa).

The J domain occupies 1–66 (MTLYDLLELP…KAEYDAMLRF (66 aa)).

This Mycoplasma pneumoniae (strain ATCC 29342 / M129 / Subtype 1) (Mycoplasmoides pneumoniae) protein is DnaJ-like protein MG002 homolog.